The sequence spans 28 residues: Omega-gliadin (28 aa).

A disordered region spans residues 1-28 (ARQLNPSDQELQSPQQLYPQQPYPQQPY). A compositionally biased stretch (low complexity) spans 9 to 20 (QELQSPQQLYPQ).

The sequence is that of Omega-gliadin from Triticum monococcum (Einkorn wheat).